Here is a 322-residue protein sequence, read N- to C-terminus: Tetraacyldisaccharide 4'-kinase (322 aa).

40 to 47 is a binding site for ATP; it reads CVGGTGKT.

The protein belongs to the LpxK family.

The enzyme catalyses a lipid A disaccharide + ATP = a lipid IVA + ADP + H(+). It participates in glycolipid biosynthesis; lipid IV(A) biosynthesis; lipid IV(A) from (3R)-3-hydroxytetradecanoyl-[acyl-carrier-protein] and UDP-N-acetyl-alpha-D-glucosamine: step 6/6. Its function is as follows. Transfers the gamma-phosphate of ATP to the 4'-position of a tetraacyldisaccharide 1-phosphate intermediate (termed DS-1-P) to form tetraacyldisaccharide 1,4'-bis-phosphate (lipid IVA). The polypeptide is Tetraacyldisaccharide 4'-kinase (Koribacter versatilis (strain Ellin345)).